The following is a 239-amino-acid chain: uncharacterized protein (239 aa).

An S4 RNA-binding domain is found at 1–65 (MRLDKLLANS…DYREFIYLMM (65 aa)). The active-site Nucleophile is the Asp103.

Belongs to the pseudouridine synthase RsuA family.

The catalysed reaction is a uridine in RNA = a pseudouridine in RNA. This is an uncharacterized protein from Bacillus subtilis (strain 168).